We begin with the raw amino-acid sequence, 270 residues long: Formamidopyrimidine-DNA glycosylase (270 aa).

Pro2 acts as the Schiff-base intermediate with DNA in catalysis. Catalysis depends on Glu3, which acts as the Proton donor. Residue Lys58 is the Proton donor; for beta-elimination activity of the active site. His91, Arg110, and Arg151 together coordinate DNA. The FPG-type zinc-finger motif lies at 236 to 270 (LVYGRDGLPCPNCGRALKHATIGQRASVWCSHCQR). Arg260 (proton donor; for delta-elimination activity) is an active-site residue.

This sequence belongs to the FPG family. As to quaternary structure, monomer. Zn(2+) is required as a cofactor.

It carries out the reaction Hydrolysis of DNA containing ring-opened 7-methylguanine residues, releasing 2,6-diamino-4-hydroxy-5-(N-methyl)formamidopyrimidine.. The enzyme catalyses 2'-deoxyribonucleotide-(2'-deoxyribose 5'-phosphate)-2'-deoxyribonucleotide-DNA = a 3'-end 2'-deoxyribonucleotide-(2,3-dehydro-2,3-deoxyribose 5'-phosphate)-DNA + a 5'-end 5'-phospho-2'-deoxyribonucleoside-DNA + H(+). Functionally, involved in base excision repair of DNA damaged by oxidation or by mutagenic agents. Acts as a DNA glycosylase that recognizes and removes damaged bases. Has a preference for oxidized purines, such as 7,8-dihydro-8-oxoguanine (8-oxoG). Has AP (apurinic/apyrimidinic) lyase activity and introduces nicks in the DNA strand. Cleaves the DNA backbone by beta-delta elimination to generate a single-strand break at the site of the removed base with both 3'- and 5'-phosphates. This is Formamidopyrimidine-DNA glycosylase from Stenotrophomonas maltophilia (strain K279a).